A 709-amino-acid chain; its full sequence is Septu protein PtuA (709 aa).

Its function is as follows. Component of antiviral defense system Septu type II, composed of PtuA and PtuB. Expression of Septu type II in B.subtilis (strain BEST7003) confers resistance to phages SBSphiC and SpBeta. May be an ATPase. This chain is Septu protein PtuA, found in Bacillus mycoides (strain KBAB4) (Bacillus weihenstephanensis).